Consider the following 47-residue polypeptide: Large ribosomal subunit protein bL34 (47 aa).

The protein belongs to the bacterial ribosomal protein bL34 family.

The protein is Large ribosomal subunit protein bL34 of Mycobacterium sp. (strain JLS).